A 131-amino-acid polypeptide reads, in one-letter code: MDKNLLEAVKFDEKGLVCAIAQDAETKRVLMVAWMNAEALQKTVETGFAHYYSRSRQKQWMKGEESGHTQKVRELRLDCDGDTIVMLIAQNGGIACHTGRESCFYKKWNGGAWETADAVLKDEKEIYGSTH.

Residue D78 coordinates Mg(2+). A Zn(2+)-binding site is contributed by C79. Mg(2+) is bound by residues D80 and D82. Zn(2+) contacts are provided by C96 and C103.

This sequence belongs to the PRA-CH family. In terms of assembly, homodimer. Requires Mg(2+) as cofactor. The cofactor is Zn(2+).

Its subcellular location is the cytoplasm. It carries out the reaction 1-(5-phospho-beta-D-ribosyl)-5'-AMP + H2O = 1-(5-phospho-beta-D-ribosyl)-5-[(5-phospho-beta-D-ribosylamino)methylideneamino]imidazole-4-carboxamide. It participates in amino-acid biosynthesis; L-histidine biosynthesis; L-histidine from 5-phospho-alpha-D-ribose 1-diphosphate: step 3/9. Functionally, catalyzes the hydrolysis of the adenine ring of phosphoribosyl-AMP. In Neisseria gonorrhoeae (strain ATCC 700825 / FA 1090), this protein is Phosphoribosyl-AMP cyclohydrolase.